The primary structure comprises 567 residues: Polyadenylate-binding protein-interacting protein 7 (567 aa).

Residues 1–22 (MSLTKKASEPKLSGTSIKPTTL) are disordered. Residues 13–22 (SGTSIKPTTL) are compositionally biased toward polar residues. The PAM2-like signature appears at 21–31 (TLNPHAAEFVP). Residues 215–259 (DMEVNPVDFLASQFPGFAAESLAEVYFANGCDLQLTIEMLTQLEL) form the CUE domain. A disordered region spans residues 355–387 (RNDSADSSIGSSRNSGAYKSGRGRSIYSDKLQS). Polar residues predominate over residues 359–371 (ADSSIGSSRNSGA). Residues 485–567 (IDLHGLHVSE…QAGLLRVIIY (83 aa)) form the Smr domain.

As to quaternary structure, interacts with MPC and PAB2. Expressed in cauline leaves, stems, rosette leaves, immature siliques and primary inflorescences.

This is Polyadenylate-binding protein-interacting protein 7 (CID7) from Arabidopsis thaliana (Mouse-ear cress).